The sequence spans 616 residues: Dihydroxy-acid dehydratase (616 aa).

Residue D81 participates in Mg(2+) binding. C122 is a [2Fe-2S] cluster binding site. The Mg(2+) site is built by D123 and K124. K124 carries the post-translational modification N6-carboxylysine. C195 lines the [2Fe-2S] cluster pocket. E491 provides a ligand contact to Mg(2+). The Proton acceptor role is filled by S517.

This sequence belongs to the IlvD/Edd family. Homodimer. It depends on [2Fe-2S] cluster as a cofactor. Mg(2+) serves as cofactor.

The enzyme catalyses (2R)-2,3-dihydroxy-3-methylbutanoate = 3-methyl-2-oxobutanoate + H2O. It catalyses the reaction (2R,3R)-2,3-dihydroxy-3-methylpentanoate = (S)-3-methyl-2-oxopentanoate + H2O. It participates in amino-acid biosynthesis; L-isoleucine biosynthesis; L-isoleucine from 2-oxobutanoate: step 3/4. The protein operates within amino-acid biosynthesis; L-valine biosynthesis; L-valine from pyruvate: step 3/4. Functions in the biosynthesis of branched-chain amino acids. Catalyzes the dehydration of (2R,3R)-2,3-dihydroxy-3-methylpentanoate (2,3-dihydroxy-3-methylvalerate) into 2-oxo-3-methylpentanoate (2-oxo-3-methylvalerate) and of (2R)-2,3-dihydroxy-3-methylbutanoate (2,3-dihydroxyisovalerate) into 2-oxo-3-methylbutanoate (2-oxoisovalerate), the penultimate precursor to L-isoleucine and L-valine, respectively. The sequence is that of Dihydroxy-acid dehydratase from Salmonella gallinarum (strain 287/91 / NCTC 13346).